Reading from the N-terminus, the 442-residue chain is uncharacterized protein (442 aa).

The ABC transporter domain occupies Met-1–Asp-238. ATP is bound at residue Gly-33–Thr-40.

Belongs to the ABC transporter superfamily. The complex is composed of two ATP-binding proteins (YvrA), two transmembrane proteins (YvrB) and a solute-binding protein (YvrC).

Probably part of an ABC transporter complex. Probably responsible for energy coupling to the transport system. This is an uncharacterized protein from Bacillus subtilis (strain 168).